A 104-amino-acid chain; its full sequence is UPF0145 protein RD1_2695 (104 aa).

This sequence belongs to the UPF0145 family.

In Roseobacter denitrificans (strain ATCC 33942 / OCh 114) (Erythrobacter sp. (strain OCh 114)), this protein is UPF0145 protein RD1_2695.